Consider the following 23-residue polypeptide: Phospholipase A2 crotoxin basic chain 3 (23 aa).

Ca(2+) serves as cofactor. Post-translationally, contains 7 disulfide bonds. In terms of tissue distribution, expressed by the venom gland.

It localises to the secreted. The catalysed reaction is a 1,2-diacyl-sn-glycero-3-phosphocholine + H2O = a 1-acyl-sn-glycero-3-phosphocholine + a fatty acid + H(+). Snake venom phospholipase A2 (PLA2) that shows presynaptic neurotoxicity. PLA2 catalyzes the calcium-dependent hydrolysis of the 2-acyl groups in 3-sn-phosphoglycerides. This Crotalus durissus terrificus (South American rattlesnake) protein is Phospholipase A2 crotoxin basic chain 3.